We begin with the raw amino-acid sequence, 277 residues long: 2-dehydro-3-deoxyphosphooctonate aldolase (277 aa).

This sequence belongs to the KdsA family.

The protein localises to the cytoplasm. The enzyme catalyses D-arabinose 5-phosphate + phosphoenolpyruvate + H2O = 3-deoxy-alpha-D-manno-2-octulosonate-8-phosphate + phosphate. Its pathway is carbohydrate biosynthesis; 3-deoxy-D-manno-octulosonate biosynthesis; 3-deoxy-D-manno-octulosonate from D-ribulose 5-phosphate: step 2/3. It participates in bacterial outer membrane biogenesis; lipopolysaccharide biosynthesis. The protein is 2-dehydro-3-deoxyphosphooctonate aldolase of Vesicomyosocius okutanii subsp. Calyptogena okutanii (strain HA).